The sequence spans 426 residues: Putative 3-oxoacyl-[acyl-carrier-protein] synthase, mitochondrial (426 aa).

A mitochondrion-targeting transit peptide spans 1-18 (MKRVVITGLGAVTPLGNG). Residues 19 to 423 (VKTNWRNLIQ…GTNASLCFKK (405 aa)) form the Ketosynthase family 3 (KS3) domain. Residues Cys170, His311, and His351 each act as for beta-ketoacyl synthase activity in the active site.

The protein belongs to the thiolase-like superfamily. Beta-ketoacyl-ACP synthases family.

It localises to the mitochondrion. The catalysed reaction is a fatty acyl-[ACP] + malonyl-[ACP] + H(+) = a 3-oxoacyl-[ACP] + holo-[ACP] + CO2. It carries out the reaction butanoyl-[ACP] + malonyl-[ACP] + H(+) = 3-oxohexanoyl-[ACP] + holo-[ACP] + CO2. It catalyses the reaction hexanoyl-[ACP] + malonyl-[ACP] + H(+) = 3-oxooctanoyl-[ACP] + holo-[ACP] + CO2. The enzyme catalyses octanoyl-[ACP] + malonyl-[ACP] + H(+) = 3-oxodecanoyl-[ACP] + holo-[ACP] + CO2. The catalysed reaction is decanoyl-[ACP] + malonyl-[ACP] + H(+) = 3-oxododecanoyl-[ACP] + holo-[ACP] + CO2. It carries out the reaction dodecanoyl-[ACP] + malonyl-[ACP] + H(+) = 3-oxotetradecanoyl-[ACP] + holo-[ACP] + CO2. It catalyses the reaction tetradecanoyl-[ACP] + malonyl-[ACP] + H(+) = 3-oxohexadecanoyl-[ACP] + holo-[ACP] + CO2. It participates in lipid metabolism; fatty acid biosynthesis. In terms of biological role, may play a role in the biosynthesis of lipoic acid as well as longer chain fatty acids required for optimal mitochondrial function. This Schizosaccharomyces pombe (strain 972 / ATCC 24843) (Fission yeast) protein is Putative 3-oxoacyl-[acyl-carrier-protein] synthase, mitochondrial.